We begin with the raw amino-acid sequence, 431 residues long: Adenosylhomocysteinase (431 aa).

The substrate site is built by T56, D131, and E156. Residue 157–159 (TTT) participates in NAD(+) binding. K186 and D190 together coordinate substrate. NAD(+) is bound by residues N191, 222 to 227 (GDVGKG), E243, 299 to 301 (IGH), and N345.

This sequence belongs to the adenosylhomocysteinase family. In terms of assembly, homotetramer. Requires NAD(+) as cofactor.

It carries out the reaction S-adenosyl-L-homocysteine + H2O = L-homocysteine + adenosine. It functions in the pathway amino-acid biosynthesis; L-homocysteine biosynthesis; L-homocysteine from S-adenosyl-L-homocysteine: step 1/1. Its function is as follows. Adenosylhomocysteine is a competitive inhibitor of S-adenosyl-L-methionine-dependent methyl transferase reactions; therefore adenosylhomocysteinase may play a key role in the control of methylations via regulation of the intracellular concentration of adenosylhomocysteine. The protein is Adenosylhomocysteinase (sahA) of Dictyostelium discoideum (Social amoeba).